A 91-amino-acid chain; its full sequence is Small ribosomal subunit protein bS16 (91 aa).

It belongs to the bacterial ribosomal protein bS16 family.

The sequence is that of Small ribosomal subunit protein bS16 from Enterococcus faecalis (strain ATCC 700802 / V583).